A 63-amino-acid polypeptide reads, in one-letter code: MKTSILFVIFGLALLFALSVAIEMEEEETDRGCGTMWSPCSTEKPCCDNFSCQPAIKWCIWSP.

The N-terminal stretch at 1–21 (MKTSILFVIFGLALLFALSVA) is a signal peptide. The propeptide occupies 22-31 (IEMEEEETDR). 3 disulfide bridges follow: Cys-33–Cys-47, Cys-40–Cys-52, and Cys-46–Cys-59.

Expressed by the venom gland.

Its subcellular location is the secreted. Its function is as follows. Inhibits preferentially tetrodotoxin-insensitive sodium currents (Nav) on rat cardiac myocytes (IC(50) is 0.26 uM) and has weaker inhibition activity toward tetrodotoxin-sensitive sodium currents on rat dorsal root ganglion (DRG) sensory neurons (IC(50) is 0.83 uM) and on cockroach dorsal unpaired median (DUM) neurons (IC(50) is 1.19 uM). Has no significant effect on potassium currents on DRG neurons. The protein is U7-theraphotoxin-Cg1a of Chilobrachys guangxiensis (Chinese earth tiger tarantula).